Reading from the N-terminus, the 894-residue chain is Phosphinomethylmalate isomerase (894 aa).

3 residues coordinate [4Fe-4S] cluster: cysteine 438, cysteine 504, and cysteine 507.

Belongs to the aconitase/IPM isomerase family. Requires [4Fe-4S] cluster as cofactor.

The enzyme catalyses phosphinomethylmalate = phosphinomethylisomalate. The catalysed reaction is phosphinomethylmalate = 2-(phosphinatomethylidene)butanedioate + H2O. It carries out the reaction 2-(phosphinatomethylidene)butanedioate + H2O = phosphinomethylisomalate. Its pathway is secondary metabolite biosynthesis; bialaphos biosynthesis. Functionally, isomerase involved in the biosynthesis of phosphinothricin tripeptide (PTT), also known as bialaphos (BA), a natural-product antibiotic and potent herbicide. Probably catalyzes the isomerization of phosphinomethylmalate to phosphinomethylisomalate. Shows no standard aconitase activity with citrate as a substrate and is not able to complement an acnA mutant. The polypeptide is Phosphinomethylmalate isomerase (Streptomyces viridochromogenes (strain DSM 40736 / JCM 4977 / BCRC 1201 / Tue 494)).